The chain runs to 313 residues: Phosphoenolpyruvate phosphomutase (313 aa).

A disordered region spans residues 1–23 (MNATERPGSDGTGSPESVGSRLK). Residue aspartate 69 is the Nucleophile of the active site.

This sequence belongs to the isocitrate lyase/PEP mutase superfamily. PEP mutase family.

It catalyses the reaction phosphoenolpyruvate + H(+) = 3-phosphonopyruvate. It participates in secondary metabolite biosynthesis; bialaphos biosynthesis. Its function is as follows. Formation of a carbon-phosphorus bond by converting phosphoenolpyruvate (PEP) to phosphonopyruvate (P-Pyr). This is Phosphoenolpyruvate phosphomutase (ppm) from Streptomyces viridochromogenes (strain DSM 40736 / JCM 4977 / BCRC 1201 / Tue 494).